Reading from the N-terminus, the 274-residue chain is Probable endonuclease LCL3 (274 aa).

The chain crosses the membrane as a helical span at residues 15 to 32 (AVLSIILTGSTLTLIYTY). One can recognise a TNase-like domain in the interval 53–261 (HWLYGKVTSV…RSRKKGLWIQ (209 aa)). Arg-151 is a catalytic residue. Asp-156 is a Ca(2+) binding site. Active-site residues include Glu-159 and Arg-199.

The protein belongs to the LCL3 family.

The protein localises to the mitochondrion. The protein resides in the membrane. The chain is Probable endonuclease LCL3 (LCL3) from Saccharomyces cerevisiae (strain Lalvin EC1118 / Prise de mousse) (Baker's yeast).